Reading from the N-terminus, the 269-residue chain is Malonyl-[acyl-carrier protein] O-methyltransferase (269 aa).

Belongs to the methyltransferase superfamily.

The catalysed reaction is malonyl-[ACP] + S-adenosyl-L-methionine = malonyl-[ACP] methyl ester + S-adenosyl-L-homocysteine. It participates in cofactor biosynthesis; biotin biosynthesis. Converts the free carboxyl group of a malonyl-thioester to its methyl ester by transfer of a methyl group from S-adenosyl-L-methionine (SAM). It allows to synthesize pimeloyl-ACP via the fatty acid synthetic pathway. The chain is Malonyl-[acyl-carrier protein] O-methyltransferase from Bacillus anthracis.